The primary structure comprises 173 residues: Photosystem I assembly protein Ycf3 (173 aa).

TPR repeat units follow at residues 35 to 68, 72 to 105, and 120 to 153; these read AYIY…EENK, GETL…NPKQ, and GRNA…YPGG.

It belongs to the Ycf3 family.

The protein localises to the cellular thylakoid membrane. In terms of biological role, essential for the assembly of the photosystem I (PSI) complex. May act as a chaperone-like factor to guide the assembly of the PSI subunits. The polypeptide is Photosystem I assembly protein Ycf3 (Prochlorococcus marinus (strain MIT 9301)).